Here is a 151-residue protein sequence, read N- to C-terminus: UPF0735 ACT domain-containing protein SSP1116 (151 aa).

In terms of domain architecture, ACT spans 74 to 149; that stretch reads TLILYVNDIV…HVSKVELISM (76 aa).

Belongs to the UPF0735 family.

The protein is UPF0735 ACT domain-containing protein SSP1116 of Staphylococcus saprophyticus subsp. saprophyticus (strain ATCC 15305 / DSM 20229 / NCIMB 8711 / NCTC 7292 / S-41).